Reading from the N-terminus, the 245-residue chain is Phosphoadenosine 5'-phosphosulfate reductase (245 aa).

Catalysis depends on cysteine 239, which acts as the Nucleophile; cysteine thiosulfonate intermediate.

This sequence belongs to the PAPS reductase family. CysH subfamily.

The protein localises to the cytoplasm. It carries out the reaction [thioredoxin]-disulfide + sulfite + adenosine 3',5'-bisphosphate + 2 H(+) = [thioredoxin]-dithiol + 3'-phosphoadenylyl sulfate. Its pathway is sulfur metabolism; hydrogen sulfide biosynthesis; sulfite from sulfate: step 3/3. Its function is as follows. Catalyzes the formation of sulfite from phosphoadenosine 5'-phosphosulfate (PAPS) using thioredoxin as an electron donor. The chain is Phosphoadenosine 5'-phosphosulfate reductase from Shewanella oneidensis (strain ATCC 700550 / JCM 31522 / CIP 106686 / LMG 19005 / NCIMB 14063 / MR-1).